The primary structure comprises 266 residues: Expansin-A13 (266 aa).

An N-terminal signal peptide occupies residues 1–19; that stretch reads MQRFLLPLLFLALSPPAIC. The Expansin-like EG45 domain occupies 58–171; sequence GGACGYGDLV…RRINCRKEGS (114 aa). The region spanning 181–260 is the Expansin-like CBD domain; sequence IFISVLITNV…NWNYGQTFEG (80 aa).

The protein belongs to the expansin family. Expansin A subfamily.

Its subcellular location is the secreted. It is found in the cell wall. The protein resides in the membrane. Its function is as follows. Causes loosening and extension of plant cell walls by disrupting non-covalent bonding between cellulose microfibrils and matrix glucans. No enzymatic activity has been found. The sequence is that of Expansin-A13 (EXPA13) from Arabidopsis thaliana (Mouse-ear cress).